We begin with the raw amino-acid sequence, 249 residues long: Type III pantothenate kinase (249 aa).

6–13 (DCGNSFIK) lines the ATP pocket. Residues Tyr-93 and 100 to 103 (GLDR) contribute to the substrate site. Asp-102 acts as the Proton acceptor in catalysis. Asp-122 contacts K(+). ATP is bound at residue Thr-125. A substrate-binding site is contributed by Thr-181.

Belongs to the type III pantothenate kinase family. As to quaternary structure, homodimer. NH4(+) serves as cofactor. Requires K(+) as cofactor.

Its subcellular location is the cytoplasm. The enzyme catalyses (R)-pantothenate + ATP = (R)-4'-phosphopantothenate + ADP + H(+). Its pathway is cofactor biosynthesis; coenzyme A biosynthesis; CoA from (R)-pantothenate: step 1/5. In terms of biological role, catalyzes the phosphorylation of pantothenate (Pan), the first step in CoA biosynthesis. The sequence is that of Type III pantothenate kinase from Pseudomonas fluorescens (strain Pf0-1).